The sequence spans 121 residues: ATP synthase epsilon chain (121 aa).

Belongs to the ATPase epsilon chain family. F-type ATPases have 2 components, CF(1) - the catalytic core - and CF(0) - the membrane proton channel. CF(1) has five subunits: alpha(3), beta(3), gamma(1), delta(1), epsilon(1). CF(0) has three main subunits: a, b and c.

It localises to the cell membrane. Functionally, produces ATP from ADP in the presence of a proton gradient across the membrane. This Mycobacterium bovis (strain ATCC BAA-935 / AF2122/97) protein is ATP synthase epsilon chain (atpC).